We begin with the raw amino-acid sequence, 670 residues long: Transketolase (670 aa).

His31 serves as a coordination point for substrate. Thiamine diphosphate contacts are provided by residues His71 and Gly120–Leu122. Asp161 is a binding site for Mg(2+). The thiamine diphosphate site is built by Gly162 and Asn191. Mg(2+)-binding residues include Asn191 and Ile193. 3 residues coordinate substrate: His268, Arg362, and Ser389. His268 lines the thiamine diphosphate pocket. Catalysis depends on Glu416, which acts as the Proton donor. Phe443 provides a ligand contact to thiamine diphosphate. Residues His467, Asp475, and Arg528 each coordinate substrate.

As to quaternary structure, homodimer. The cofactor is Mg(2+). Requires Ca(2+) as cofactor. Mn(2+) serves as cofactor. Co(2+) is required as a cofactor. It depends on thiamine diphosphate as a cofactor.

The catalysed reaction is D-sedoheptulose 7-phosphate + D-glyceraldehyde 3-phosphate = aldehydo-D-ribose 5-phosphate + D-xylulose 5-phosphate. In terms of biological role, catalyzes the transfer of a two-carbon ketol group from a ketose donor to an aldose acceptor, via a covalent intermediate with the cofactor thiamine pyrophosphate. This is Transketolase (tkt) from Nostoc sp. (strain PCC 7120 / SAG 25.82 / UTEX 2576).